The primary structure comprises 140 residues: Profilin-2 (140 aa).

A2 is subject to N-acetylalanine.

It belongs to the profilin family. As to quaternary structure, occurs in many kinds of cells as a complex with monomeric actin in a 1:1 ratio. Interacts with PFN2. Interacts with ACTMAP (via N-terminus); the interaction may facilitate efficient cleavage of the acetylated N-terminus of immature actin by ACTMAP. In terms of tissue distribution, highly expressed in brain, skeletal muscle and kidney and less strongly in heart, placenta, lung and liver.

The protein localises to the cytoplasm. Its subcellular location is the cytoskeleton. In terms of biological role, binds to actin and affects the structure of the cytoskeleton. At high concentrations, profilin prevents the polymerization of actin, whereas it enhances it at low concentrations. By binding to PIP2, it inhibits the formation of IP3 and DG. This Homo sapiens (Human) protein is Profilin-2 (PFN2).